Reading from the N-terminus, the 511-residue chain is Histidine ammonia-lyase (511 aa).

The segment at residues 143-145 is a cross-link (5-imidazolinone (Ala-Gly)); the sequence is ASG. At S144 the chain carries 2,3-didehydroalanine (Ser).

The protein belongs to the PAL/histidase family. Contains an active site 4-methylidene-imidazol-5-one (MIO), which is formed autocatalytically by cyclization and dehydration of residues Ala-Ser-Gly.

The protein localises to the cytoplasm. The enzyme catalyses L-histidine = trans-urocanate + NH4(+). It functions in the pathway amino-acid degradation; L-histidine degradation into L-glutamate; N-formimidoyl-L-glutamate from L-histidine: step 1/3. The polypeptide is Histidine ammonia-lyase (Vibrio parahaemolyticus serotype O3:K6 (strain RIMD 2210633)).